The sequence spans 225 residues: Ribosome maturation factor RimP (225 aa).

Belongs to the RimP family.

The protein localises to the cytoplasm. In terms of biological role, required for maturation of 30S ribosomal subunits. This chain is Ribosome maturation factor RimP, found in Rhodospirillum rubrum (strain ATCC 11170 / ATH 1.1.1 / DSM 467 / LMG 4362 / NCIMB 8255 / S1).